A 151-amino-acid chain; its full sequence is CD-NTase-associated protein 19 (151 aa).

The next 3 membrane-spanning stretches (helical) occupy residues 25–45 (TVFNFYIAITGLLAAGIGVTL), 52–72 (VLFTSLMGVFVAFISFIFWKL), and 127–147 (ISFVIVGFTGILLAITPFLMK).

It belongs to the Cap19 family.

The protein resides in the cell inner membrane. Membrane protein component of a CBASS (cyclic oligonucleotide-based antiphage signaling system) which provides immunity against bacteriophage. The CD-NTase protein synthesizes cyclic nucleotides in response to infection; these serve as specific second messenger signals. The signals activate a diverse range of effectors, leading to bacterial cell death and thus abortive phage infection. A type III CBASS system. Expression of this CBASS system (Cap17-CapW-CdnC-Cap7-Cap6-Cap18-Cap19) in a susceptible E.coli (strain JP313) confers resistance to bacteriophage lambda cI-. The sequence is that of CD-NTase-associated protein 19 from Escherichia coli.